The following is a 280-amino-acid chain: Putative ABC transporter ATP-binding protein PYRAB03730 (280 aa).

The ABC transporter domain occupies 4–244 (IEVENVSFKY…VEFLERIGIR (241 aa)). 38–45 (GPSGSGKS) is a binding site for ATP.

Belongs to the ABC transporter superfamily.

The protein localises to the cell membrane. Probably part of an ABC transporter complex. Responsible for energy coupling to the transport system. This is Putative ABC transporter ATP-binding protein PYRAB03730 from Pyrococcus abyssi (strain GE5 / Orsay).